The sequence spans 430 residues: Adenylosuccinate synthetase (430 aa).

GTP contacts are provided by residues 13-19 (GDEGKGK) and 41-43 (GHT). Residue Asp-14 is the Proton acceptor of the active site. Mg(2+) is bound by residues Asp-14 and Gly-41. IMP-binding positions include 14–17 (DEGK), 39–42 (NAGH), Thr-130, Arg-144, Gln-225, Thr-240, and Arg-304. His-42 (proton donor) is an active-site residue. 300-306 (STTGRAR) lines the substrate pocket. GTP-binding positions include Arg-306, 332–334 (KLD), and 414–416 (STG).

This sequence belongs to the adenylosuccinate synthetase family. Homodimer. Mg(2+) serves as cofactor.

Its subcellular location is the cytoplasm. The enzyme catalyses IMP + L-aspartate + GTP = N(6)-(1,2-dicarboxyethyl)-AMP + GDP + phosphate + 2 H(+). It functions in the pathway purine metabolism; AMP biosynthesis via de novo pathway; AMP from IMP: step 1/2. In terms of biological role, plays an important role in the de novo pathway of purine nucleotide biosynthesis. Catalyzes the first committed step in the biosynthesis of AMP from IMP. The chain is Adenylosuccinate synthetase from Azotobacter vinelandii (strain DJ / ATCC BAA-1303).